A 506-amino-acid polypeptide reads, in one-letter code: DEAD-box ATP-dependent RNA helicase CshA (506 aa).

Residues 2–30 (QNFKELGISDNTVQSLESMGFKEPTPIQK) carry the Q motif motif. Residues 33 to 203 (IPYALQGIDI…QQFMKSPKII (171 aa)) form the Helicase ATP-binding domain. Residue 46–53 (AQTGTGKT) participates in ATP binding. The DEAD box signature appears at 150–153 (DEAD). The Helicase C-terminal domain maps to 214–375 (QIEEFYTIVK…LRPPHRKEVL (162 aa)). The disordered stretch occupies residues 436–506 (EKPLSRKGRN…KGRTFADHQK (71 aa)). The segment covering 468 to 480 (KRSKGYSSKKKST) has biased composition (basic residues).

The protein belongs to the DEAD box helicase family. CshA subfamily. Oligomerizes, may be a member of the RNA degradosome.

The protein resides in the cytoplasm. The enzyme catalyses ATP + H2O = ADP + phosphate + H(+). Functionally, DEAD-box RNA helicase possibly involved in RNA degradation. Unwinds dsRNA in both 5'- and 3'-directions, has RNA-dependent ATPase activity. The chain is DEAD-box ATP-dependent RNA helicase CshA from Staphylococcus aureus (strain MW2).